The chain runs to 684 residues: uncharacterized protein (684 aa).

Residues 54–239 form the Helicase ATP-binding domain; the sequence is LKYLYNKKDV…LLFNRDFEVV (186 aa). ATP is bound at residue 67–74; the sequence is TSTASGKS. The DEVH box motif lies at 181–184; sequence DELH. The region spanning 264–419 is the Helicase C-terminal domain; that stretch reads LLRRLIENLV…YMPVNIKNRF (156 aa).

This sequence belongs to the helicase family.

This is an uncharacterized protein from Methanocaldococcus jannaschii (strain ATCC 43067 / DSM 2661 / JAL-1 / JCM 10045 / NBRC 100440) (Methanococcus jannaschii).